The chain runs to 758 residues: Phosphoribosylformylglycinamidine synthase subunit PurL (758 aa).

Residue histidine 57 is part of the active site. Positions 60 and 104 each coordinate ATP. Residue glutamate 106 coordinates Mg(2+). Residues 107 to 110 and arginine 129 contribute to the substrate site; that span reads SHNH. Histidine 108 serves as the catalytic Proton acceptor. Aspartate 130 contacts Mg(2+). Position 254 (glutamine 254) interacts with substrate. Position 282 (aspartate 282) interacts with Mg(2+). Substrate is bound at residue 326-328; it reads ESQ. Residues asparagine 509 and glycine 546 each coordinate ATP. Residue asparagine 547 participates in Mg(2+) binding. Residue serine 549 participates in substrate binding.

The protein belongs to the FGAMS family. As to quaternary structure, monomer. Part of the FGAM synthase complex composed of 1 PurL, 1 PurQ and 2 PurS subunits.

It is found in the cytoplasm. It catalyses the reaction N(2)-formyl-N(1)-(5-phospho-beta-D-ribosyl)glycinamide + L-glutamine + ATP + H2O = 2-formamido-N(1)-(5-O-phospho-beta-D-ribosyl)acetamidine + L-glutamate + ADP + phosphate + H(+). Its pathway is purine metabolism; IMP biosynthesis via de novo pathway; 5-amino-1-(5-phospho-D-ribosyl)imidazole from N(2)-formyl-N(1)-(5-phospho-D-ribosyl)glycinamide: step 1/2. In terms of biological role, part of the phosphoribosylformylglycinamidine synthase complex involved in the purines biosynthetic pathway. Catalyzes the ATP-dependent conversion of formylglycinamide ribonucleotide (FGAR) and glutamine to yield formylglycinamidine ribonucleotide (FGAM) and glutamate. The FGAM synthase complex is composed of three subunits. PurQ produces an ammonia molecule by converting glutamine to glutamate. PurL transfers the ammonia molecule to FGAR to form FGAM in an ATP-dependent manner. PurS interacts with PurQ and PurL and is thought to assist in the transfer of the ammonia molecule from PurQ to PurL. The protein is Phosphoribosylformylglycinamidine synthase subunit PurL of Corynebacterium ammoniagenes (Brevibacterium ammoniagenes).